The following is a 152-amino-acid chain: Snaclec coagulation factor IX/factor X-binding protein subunit A (152 aa).

The signal sequence occupies residues M1 to A23. The region spanning D24–A152 is the C-type lectin domain. Disulfide bonds link C25/C36, C53/C150, and C125/C142. Positions 64, 66, and 70 each coordinate Ca(2+). Ca(2+) is bound at residue E151.

This sequence belongs to the snaclec family. Heterodimer of subunits A and B; disulfide-linked. Expressed by the venom gland.

The protein localises to the secreted. In terms of biological role, anticoagulant protein which binds to the gamma-carboxyglutamic acid-domain regions of factors IX (F9) and factor X (F10) in the presence of calcium with a 1 to 1 stoichiometry. This Protobothrops flavoviridis (Habu) protein is Snaclec coagulation factor IX/factor X-binding protein subunit A.